Here is a 329-residue protein sequence, read N- to C-terminus: MFQNSFLHKKFISTIEKNNLLPYNSSLLVSFSGGQDSLALVKILYDFKNIYNWKISLIHFDHRWRSDSMLVSKQVIKYAKMCNLSVYYFECPKYLNTEETSRKWRYLTLINTAYVNNFNTIVLAHTATDKAETMLSNLFRGTSLDGLSSIHWSSQLSNAVHLVRPLLNCYRSETSWFCRKYFLPVWIDQSNYNNSLSRNRLRQELIPYIKSYFQPQIEQKCYLLSSLISLDVDFLEQEALRIYSLIQHEELLAMNYLVIKLLHPSLQSRILKIFFISNLDLNLNSIQISDIILLINQSISTNINISNYILGTDGTWLYVGAKTKCIKSN.

Residue 32 to 37 (SGGQDS) coordinates ATP.

Belongs to the tRNA(Ile)-lysidine synthase family.

It localises to the plastid. The protein resides in the chloroplast. The catalysed reaction is cytidine(34) in tRNA(Ile2) + L-lysine + ATP = lysidine(34) in tRNA(Ile2) + AMP + diphosphate + H(+). In terms of biological role, ligates lysine onto the cytidine present at position 34 of the AUA codon-specific tRNA(Ile) that contains the anticodon CAU, in an ATP-dependent manner. Cytidine is converted to lysidine, thus changing the amino acid specificity of the tRNA from methionine to isoleucine. This Pyropia yezoensis (Susabi-nori) protein is tRNA(Ile)-lysidine synthase, chloroplastic.